The sequence spans 90 residues: Acyl-CoA-binding protein homolog (90 aa).

Residues 3-89 (LQEQFDQAAS…VESLIASLGL (87 aa)) form the ACB domain. Residues Arg15, 30–34 (YALFK), Lys53, Lys57, and Tyr76 contribute to the an acyl-CoA site.

The protein belongs to the ACBP family.

Its function is as follows. Binds medium- and long-chain acyl-CoA esters with very high affinity and may function as an intracellular carrier of acyl-CoA esters. This chain is Acyl-CoA-binding protein homolog, found in Manduca sexta (Tobacco hawkmoth).